Reading from the N-terminus, the 157-residue chain is UPF0225 protein PA14_50900 (157 aa).

It belongs to the UPF0225 family.

The protein is UPF0225 protein PA14_50900 of Pseudomonas aeruginosa (strain UCBPP-PA14).